Consider the following 702-residue polypeptide: Polyribonucleotide nucleotidyltransferase (702 aa).

2 residues coordinate Mg(2+): Asp485 and Asp491. The KH domain occupies 552–611 (PKTSTLQIDPEKIRDVIGAGGKVINKIIADTGVKIDIKEDGLVYVSSAESEGVKEAVKII). Residues 621–689 (GEIYLGKVTK…SQGRINLSRK (69 aa)) form the S1 motif domain.

It belongs to the polyribonucleotide nucleotidyltransferase family. Mg(2+) serves as cofactor.

Its subcellular location is the cytoplasm. It carries out the reaction RNA(n+1) + phosphate = RNA(n) + a ribonucleoside 5'-diphosphate. Functionally, involved in mRNA degradation. Catalyzes the phosphorolysis of single-stranded polyribonucleotides processively in the 3'- to 5'-direction. In Clostridium perfringens (strain ATCC 13124 / DSM 756 / JCM 1290 / NCIMB 6125 / NCTC 8237 / Type A), this protein is Polyribonucleotide nucleotidyltransferase.